The sequence spans 457 residues: MGSPKKNENKGFFAAMTSGFSMFGTAVSRSVNGVQGNEGVEVINPEGGKEDAEEEAQKGRWKDEERDSYWKMMQKYIGSDITSMVTLPVVIFEPMTMLQKMAEIMEYSHLLDQADECEDPYLRLVYASSWAISVYYAFQRTWKPFNPILGETYEMVNHGGISFISEQVSHHPPMSAGHAENEHFIYDITSKLKTKLLGNSVDVYPVGRTRVTLKKDGVVLDLVPPLTKIHNLIFGRTWVDSPGEMVMTNLTTGDKVVLYFQPCGWFGSGRYEVDGYVYSAAEEPKIMMTGKWNEKMSYQPCDAEGEPLPGTELKEVWHLADVPKNDNFQYTHFAHKINSFDTAPAKLLASDSRIRPDRYSLEQGDLSKAGSEKHSLEERQRAEKRTRETKGQKFTPRWFDLTDEITPTPWGDIEVYQYNGKYNEHRDTAESSSSASNETDLKSIEFNPWQYGNISTE.

2 disordered regions span residues 37–61 (NEGV…KGRW) and 363–393 (QGDL…KGQK). 2 stretches are compositionally biased toward basic and acidic residues: residues 47-61 (GGKE…KGRW) and 370-391 (GSEK…ETKG).

It belongs to the OSBP family. In terms of tissue distribution, expressed in roots, leaves, stems and flowers.

May be involved in the transport of sterols. The protein is Oxysterol-binding protein-related protein 3C (ORP3C) of Arabidopsis thaliana (Mouse-ear cress).